Here is a 387-residue protein sequence, read N- to C-terminus: Gamma-butyrobetaine dioxygenase (387 aa).

Zn(2+) is bound by residues Cys38, Cys40, Cys43, and His82. 3 residues coordinate Fe cation: His202, Asp204, and His347. Ser351 carries the post-translational modification Phosphoserine.

This sequence belongs to the gamma-BBH/TMLD family. It depends on Fe(2+) as a cofactor. L-ascorbate serves as cofactor.

The protein resides in the cytoplasm. It catalyses the reaction 4-(trimethylamino)butanoate + 2-oxoglutarate + O2 = carnitine + succinate + CO2. It participates in amine and polyamine biosynthesis; carnitine biosynthesis. Its function is as follows. Catalyzes the formation of L-carnitine from gamma-butyrobetaine. The sequence is that of Gamma-butyrobetaine dioxygenase (Bbox1) from Mus musculus (Mouse).